The sequence spans 238 residues: Pyridoxine 5'-phosphate synthase (238 aa).

Asn-7 is a binding site for 3-amino-2-oxopropyl phosphate. 9–10 (DH) serves as a coordination point for 1-deoxy-D-xylulose 5-phosphate. Arg-18 contributes to the 3-amino-2-oxopropyl phosphate binding site. The active-site Proton acceptor is His-43. 2 residues coordinate 1-deoxy-D-xylulose 5-phosphate: Arg-45 and His-50. The active-site Proton acceptor is the Glu-70. Thr-100 contributes to the 1-deoxy-D-xylulose 5-phosphate binding site. The Proton donor role is filled by His-191. 3-amino-2-oxopropyl phosphate contacts are provided by residues Gly-192 and 213 to 214 (GH).

This sequence belongs to the PNP synthase family. In terms of assembly, homooctamer; tetramer of dimers.

It localises to the cytoplasm. It catalyses the reaction 3-amino-2-oxopropyl phosphate + 1-deoxy-D-xylulose 5-phosphate = pyridoxine 5'-phosphate + phosphate + 2 H2O + H(+). Its pathway is cofactor biosynthesis; pyridoxine 5'-phosphate biosynthesis; pyridoxine 5'-phosphate from D-erythrose 4-phosphate: step 5/5. In terms of biological role, catalyzes the complicated ring closure reaction between the two acyclic compounds 1-deoxy-D-xylulose-5-phosphate (DXP) and 3-amino-2-oxopropyl phosphate (1-amino-acetone-3-phosphate or AAP) to form pyridoxine 5'-phosphate (PNP) and inorganic phosphate. The protein is Pyridoxine 5'-phosphate synthase of Syntrophobacter fumaroxidans (strain DSM 10017 / MPOB).